Here is a 283-residue protein sequence, read N- to C-terminus: Bifunctional protein FolD (283 aa).

NADP(+)-binding positions include 165 to 167 (GRS), Ser-190, and Val-231.

It belongs to the tetrahydrofolate dehydrogenase/cyclohydrolase family. In terms of assembly, homodimer.

The catalysed reaction is (6R)-5,10-methylene-5,6,7,8-tetrahydrofolate + NADP(+) = (6R)-5,10-methenyltetrahydrofolate + NADPH. The enzyme catalyses (6R)-5,10-methenyltetrahydrofolate + H2O = (6R)-10-formyltetrahydrofolate + H(+). It participates in one-carbon metabolism; tetrahydrofolate interconversion. In terms of biological role, catalyzes the oxidation of 5,10-methylenetetrahydrofolate to 5,10-methenyltetrahydrofolate and then the hydrolysis of 5,10-methenyltetrahydrofolate to 10-formyltetrahydrofolate. This chain is Bifunctional protein FolD, found in Bacillus velezensis (strain DSM 23117 / BGSC 10A6 / LMG 26770 / FZB42) (Bacillus amyloliquefaciens subsp. plantarum).